The following is a 95-amino-acid chain: Aspartyl/glutamyl-tRNA(Asn/Gln) amidotransferase subunit C (95 aa).

Belongs to the GatC family. In terms of assembly, heterotrimer of A, B and C subunits.

It carries out the reaction L-glutamyl-tRNA(Gln) + L-glutamine + ATP + H2O = L-glutaminyl-tRNA(Gln) + L-glutamate + ADP + phosphate + H(+). The enzyme catalyses L-aspartyl-tRNA(Asn) + L-glutamine + ATP + H2O = L-asparaginyl-tRNA(Asn) + L-glutamate + ADP + phosphate + 2 H(+). In terms of biological role, allows the formation of correctly charged Asn-tRNA(Asn) or Gln-tRNA(Gln) through the transamidation of misacylated Asp-tRNA(Asn) or Glu-tRNA(Gln) in organisms which lack either or both of asparaginyl-tRNA or glutaminyl-tRNA synthetases. The reaction takes place in the presence of glutamine and ATP through an activated phospho-Asp-tRNA(Asn) or phospho-Glu-tRNA(Gln). The protein is Aspartyl/glutamyl-tRNA(Asn/Gln) amidotransferase subunit C of Brucella abortus (strain S19).